A 425-amino-acid chain; its full sequence is Serine--tRNA ligase (425 aa).

L-serine is bound at residue 228–230; the sequence is TAE. 259-261 provides a ligand contact to ATP; the sequence is RSE. L-serine is bound at residue E282. Residue 346–349 participates in ATP binding; that stretch reads EIAS. L-serine is bound at residue S382.

The protein belongs to the class-II aminoacyl-tRNA synthetase family. Type-1 seryl-tRNA synthetase subfamily. As to quaternary structure, homodimer. The tRNA molecule binds across the dimer.

The protein resides in the cytoplasm. The catalysed reaction is tRNA(Ser) + L-serine + ATP = L-seryl-tRNA(Ser) + AMP + diphosphate + H(+). It carries out the reaction tRNA(Sec) + L-serine + ATP = L-seryl-tRNA(Sec) + AMP + diphosphate + H(+). It functions in the pathway aminoacyl-tRNA biosynthesis; selenocysteinyl-tRNA(Sec) biosynthesis; L-seryl-tRNA(Sec) from L-serine and tRNA(Sec): step 1/1. Catalyzes the attachment of serine to tRNA(Ser). Is also able to aminoacylate tRNA(Sec) with serine, to form the misacylated tRNA L-seryl-tRNA(Sec), which will be further converted into selenocysteinyl-tRNA(Sec). This chain is Serine--tRNA ligase, found in Rickettsia rickettsii (strain Iowa).